A 367-amino-acid polypeptide reads, in one-letter code: Probable butyrate kinase (367 aa).

This sequence belongs to the acetokinase family.

The protein localises to the cytoplasm. The catalysed reaction is butanoate + ATP = butanoyl phosphate + ADP. The protein is Probable butyrate kinase of Bacillus cereus (strain ZK / E33L).